The sequence spans 168 residues: NADH-quinone oxidoreductase subunit E 2 (168 aa).

[2Fe-2S] cluster is bound by residues Cys77, Cys82, Cys118, and Cys122.

It belongs to the complex I 24 kDa subunit family. Requires [2Fe-2S] cluster as cofactor.

It carries out the reaction a quinone + NADH + 5 H(+)(in) = a quinol + NAD(+) + 4 H(+)(out). Functionally, NDH-1 shuttles electrons from NADH, via FMN and iron-sulfur (Fe-S) centers, to quinones in the respiratory chain. The immediate electron acceptor for the enzyme in this species is believed to be ubiquinone. Couples the redox reaction to proton translocation (for every two electrons transferred, four hydrogen ions are translocated across the cytoplasmic membrane), and thus conserves the redox energy in a proton gradient. The polypeptide is NADH-quinone oxidoreductase subunit E 2 (nuoE2) (Rhizobium meliloti (strain 1021) (Ensifer meliloti)).